Consider the following 1461-residue polypeptide: Autotransporter adhesin SadA (1461 aa).

A signal peptide spans 1 to 54 (MNRIFKVLWNAATGTFVVTSETAKSRGKKNGRRKLAVSALIGLSSIMVSADALA). A surface exposed passenger domain region spans residues 55–1372 (NAGNDTGDGV…EEANTYTDQK (1318 aa)). Residues 1373–1461 (MGEMNSKIKG…SAAIGAGFQW (89 aa)) are translocator domain. 4 consecutive transmembrane segments (beta stranded) span residues 1407-1417 (GANMTSIAGGT), 1421-1431 (ESAVAIGVSMV), 1440-1446 (KLQGTSN), and 1450-1461 (DYSAAIGAGFQW).

The protein belongs to the autotransporter-2 (AT-2) (TC 1.B.40) family. As to quaternary structure, homotrimer.

Its subcellular location is the cell surface. The protein localises to the cell outer membrane. Functionally, involved in cell aggregation, biofilm formation, and adhesion to human intestinal epithelial cells. This is Autotransporter adhesin SadA from Salmonella typhimurium (strain LT2 / SGSC1412 / ATCC 700720).